Reading from the N-terminus, the 1770-residue chain is MLLLLTLLLFAGTVAADFQHNWQVGNEYTYLVRSRTLTSLGDLSDVHTGILIKALLTVQAKDSNVLAAKVWNGQYARVQQSMPDGWETEISDQMLELRDLPISGKPFQIRMKHGLIRDLIVDRDVPTWEVNILKSIVGQLQVDTQGENAVKVNSVQVPTDDEPYASFKAMEDSVGGKCEVLYDIAPLSDFVIHRSPELVPMPTLKGDGRHMEVIKIKNFDNCDQRINYHFGMTDNSRLEPGTNKNGKFFSRSSTSRIVISESLKHFTIQSSVTTSKMMVSPRLYDRQNGLVLSRMNLTLAKMEKTSKPLPMVDNPESTGNLVYIYNNPFSDVEERRVSKTAMNSNQIVSDNSLSSSEEKLKQDILNLRTDISSSSSSISSSEENDFWQPKPTLEDAPQNSLLPNFVGYKGKHIGKSGKVDVINAAKELIFQIANELEDASNIPVHATLEKFMILCNLMRTMNRKQISELESNMQISPNELKPNDKSQVIKQNTWTVFRDAITQTGTGPAFLTIKEWIERGTTKSMEAANIMSKLPKTVRTPTDSYIRSFFELLQNPKVSNEQFLNTAATLSFCEMIHNAQVNKRSIHNNYPVHTFGRLTSKHDNSLYDEYIPFLERELRKAHQEKDSPRIQTYIMALGMIGEPKILSVFEPYLEGKQQMTVFQRTLMVGSLGKLTETNPKLARSVLYKIYLNTMESHEVRCTAVFLLMKTNPPLSMLQRMAEFTKLDTNRQVNSAVKSTIQSLMKLKSPEWKDLAKKARSVNHLLTHHEYDYELSRGYIDEKILENQNIITHMILNYVGSEDSVIPRILYLTWYSSNGDIKVPSTKVLAMISSVKSFMELSLRSVKDRETIISAAEKIAEELKIVPEELVPLEGNLMINNKYALKFFPFDKHILDKLPTLISNYIEAVKEGKFMNVNMLDTYESVHSFPTETGLPFVYTFNVIKLTKTSGTVQAQINPDFAFIVNSNLRLTFSKNVQGRVGFVTPFEHRHFISGIDSNLHVYAPLKISLDVNTPKGNMQWKIWPMKGEEKSRLFHYSVVPFVSNHDILNLRPLSMEKGTRPMIPDDNTSLALPKNEGPFRLNVETAKTNEEMWELIDTEKLTDRLPYPWTMDNERYVKVDMYMNLEGEQKDPVIFSTSFDSKVMTRPDTDSENWTPKMMAVEPTDKQANSKTRRQEMMREAGRGIESAKSYVVDVRVHVPGESESETVLTLAWSESNVESKGRLLGFWRVEMPRSNADYEVCIGSQIMVSPETLLSYDEKMDQKPKMDFNVDIRYGKNCGKGERIDMNGKLRQSPRLKELVGATSIIKDCVEDMKRGNKILRTCQKAVVLSMLLDEVDISMEVPSDALIALYSQGLFSLSEIDNLDVSLDVSNPKNAGKKKIDVRAKLNEYLDKADVIVNTPIMDAHFKDVKLSDFGFSTEDILDTADEDLLINNVFYEDETSCMLDKTRAQTFDGKDYPLRLGPCWHAVMTTYPRINPDNHNEKLHIPKDKSVSVLSRENEAGQKEVKVLLGSDKIKFVPGTTSQPEVFVNGEKIVVSRNKAYQKVEENEIIFEIYKMGDRFIGLTSDKFDVSLALDGERVMLKASEDYRYSVRGLCGNFDHDSTNDFVGPKNCLFRKPEHFVASYALISNQCEGDSLNVAKSLQDHDCIRQERTQQRNVISDSESGRLDTEMSTWGYHHNVNKHCTIHRTQVKETDDKICFTMRPVVSCASGCTAVETKSKPYKFHCMEKNEAAMKLKKRIEKGANPDLSQKPVSTTEELTVPFVCKA.

Residues 1–16 (MLLLLTLLLFAGTVAA) form the signal peptide. In terms of domain architecture, Vitellogenin spans 22 to 809 (WQVGNEYTYL…SEDSVIPRIL (788 aa)). C178 and C222 are oxidised to a cystine. N-linked (GlcNAc...) asparagine glycosylation occurs at N296. Residues 373-394 (SSSSSISSSEENDFWQPKPTLE) are disordered. N-linked (GlcNAc...) asparagine glycosylation occurs at N1067. One can recognise a VWFD domain in the interval 1442–1635 (TSCMLDKTRA…SYALISNQCE (194 aa)). Disulfide bonds link C1444–C1598 and C1466–C1634.

In terms of tissue distribution, accumulates in the hemolymph. Represents up to 70% of the queen's hemolymph proteins. During the first week of the worker adult life, when it becomes a nurse bee and performs brood-rearing tasks, the vitellogenin titer increases and may account for up to 40% of the total hemolymph proteins.

The protein resides in the secreted. Its function is as follows. Precursor of the egg-yolk proteins that are sources of nutrients during embryonic development. Involved in the differentiation of honeybee larvae into queens. This chain is Vitellogenin (Vg), found in Apis mellifera (Honeybee).